The following is a 216-amino-acid chain: Chloramphenicol acetyltransferase (216 aa).

His-189 (proton acceptor) is an active-site residue.

The protein belongs to the chloramphenicol acetyltransferase family. In terms of assembly, homotrimer.

It carries out the reaction chloramphenicol + acetyl-CoA = chloramphenicol 3-acetate + CoA. Its function is as follows. This enzyme is an effector of chloramphenicol resistance in bacteria. In Staphylococcus aureus, this protein is Chloramphenicol acetyltransferase (cat).